We begin with the raw amino-acid sequence, 251 residues long: MLLKAAPAFALLNTQGENLSPLFSSSKSFSPKNGNRFVVSASKATNHKPLTGVVFEPFEELKKELMLVPAVPDTSLCRQKYSDDCEAAINEQINVEYNNSYVYHAMFAYFDRDNVALKGLAKFFKESSLEEREHAEKLMEFQNKRGGRVKLLSICAPPTEFDHCEKGDALYAMELALCLEKLTNQRLLNLHAVASRSNDVHLADFLESEFLVEQVDAIKKISEYVAQLRRVGQGHGVWQFDQMLLNEGAAA.

The transit peptide at 1–45 directs the protein to the chloroplast; the sequence is MLLKAAPAFALLNTQGENLSPLFSSSKSFSPKNGNRFVVSASKAT. The segment at 46–78 is extension peptide (EP); sequence NHKPLTGVVFEPFEELKKELMLVPAVPDTSLCR. The Ferritin-like diiron domain maps to 79-232; that stretch reads QKYSDDCEAA…EYVAQLRRVG (154 aa). The Fe cation site is built by Glu96, Glu131, His134, Glu180, and Gln214.

This sequence belongs to the ferritin family. Oligomer of 24 subunits. There are two types of subunits: L (light) chain and H (heavy) chain. The major chain can be light or heavy, depending on the species and tissue type. The functional molecule forms a roughly spherical shell with a diameter of 12 nm and contains a central cavity into which the insoluble mineral iron core is deposited.

It localises to the plastid. It is found in the chloroplast. It carries out the reaction 4 Fe(2+) + O2 + 4 H(+) = 4 Fe(3+) + 2 H2O. In terms of biological role, stores iron in a soluble, non-toxic, readily available form. Important for iron homeostasis. Has ferroxidase activity. Iron is taken up in the ferrous form and deposited as ferric hydroxides after oxidation. In Nicotiana tabacum (Common tobacco), this protein is Ferritin-1, chloroplastic (FER1).